A 370-amino-acid chain; its full sequence is tRNA-specific 2-thiouridylase MnmA (370 aa).

ATP-binding positions include 6-13 (AMSGGVDS) and Leu32. The active-site Nucleophile is Cys101. A disulfide bond links Cys101 and Cys193. ATP is bound at residue Gly125. Positions 143–145 (KDQ) are interaction with tRNA. Cys193 serves as the catalytic Cysteine persulfide intermediate.

It belongs to the MnmA/TRMU family.

The protein resides in the cytoplasm. It carries out the reaction S-sulfanyl-L-cysteinyl-[protein] + uridine(34) in tRNA + AH2 + ATP = 2-thiouridine(34) in tRNA + L-cysteinyl-[protein] + A + AMP + diphosphate + H(+). Its function is as follows. Catalyzes the 2-thiolation of uridine at the wobble position (U34) of tRNA, leading to the formation of s(2)U34. In Rhodococcus erythropolis (strain PR4 / NBRC 100887), this protein is tRNA-specific 2-thiouridylase MnmA.